Reading from the N-terminus, the 348-residue chain is Sulfate/thiosulfate import ATP-binding protein CysA (348 aa).

Residues 3-237 (IEVRNIVKEF…PASAFVHGFI (235 aa)) form the ABC transporter domain. Position 35 to 42 (35 to 42 (GPSGSGKT)) interacts with ATP.

The protein belongs to the ABC transporter superfamily. Sulfate/tungstate importer (TC 3.A.1.6) family. In terms of assembly, the complex is composed of two ATP-binding proteins (CysA), two transmembrane proteins (CysT and CysW) and a solute-binding protein (CysP).

Its subcellular location is the cell inner membrane. The catalysed reaction is sulfate(out) + ATP + H2O = sulfate(in) + ADP + phosphate + H(+). It carries out the reaction thiosulfate(out) + ATP + H2O = thiosulfate(in) + ADP + phosphate + H(+). Its function is as follows. Part of the ABC transporter complex CysAWTP involved in sulfate/thiosulfate import. Responsible for energy coupling to the transport system. The polypeptide is Sulfate/thiosulfate import ATP-binding protein CysA (Rhodopseudomonas palustris (strain ATCC BAA-98 / CGA009)).